A 249-amino-acid polypeptide reads, in one-letter code: Metallo-beta-lactamase type 2 (249 aa).

The first 22 residues, 1–22, serve as a signal peptide directing secretion; the sequence is MMKKMKWALVLALGLTGLNAFG. Residues histidine 98, histidine 100, aspartate 102, histidine 161, and cysteine 180 each coordinate Zn(2+). Lysine 183 contributes to the substrate binding site. Residue histidine 222 participates in Zn(2+) binding.

Belongs to the metallo-beta-lactamase superfamily. Class-B beta-lactamase family. Monomer. The cofactor is Zn(2+).

It is found in the periplasm. The catalysed reaction is a beta-lactam + H2O = a substituted beta-amino acid. Its function is as follows. Confers resistance to the different beta-lactams antibiotics (penicillin, cephalosporin and carbapenem) via the hydrolysis of the beta-lactam ring. The chain is Metallo-beta-lactamase type 2 (blaB4) from Elizabethkingia meningoseptica (Chryseobacterium meningosepticum).